The primary structure comprises 493 residues: Glycerol kinase 2 (493 aa).

Ser12 provides a ligand contact to ADP. ATP-binding residues include Ser12 and Thr13. Ser12 provides a ligand contact to sn-glycerol 3-phosphate. Lys16 serves as a coordination point for ADP. Residues Arg82, Glu83, Tyr134, and Asp243 each coordinate sn-glycerol 3-phosphate. Residues Arg82, Glu83, Tyr134, Asp243, and Gln244 each contribute to the glycerol site. The ADP site is built by Thr265 and Gly308. ATP contacts are provided by Thr265, Gly308, and Asn312. Residue Asn413 coordinates ADP.

This sequence belongs to the FGGY kinase family. In terms of assembly, homotetramer and homodimer (in equilibrium).

It carries out the reaction glycerol + ATP = sn-glycerol 3-phosphate + ADP + H(+). It participates in polyol metabolism; glycerol degradation via glycerol kinase pathway; sn-glycerol 3-phosphate from glycerol: step 1/1. With respect to regulation, activated by phosphorylation and inhibited by fructose 1,6-bisphosphate (FBP). In terms of biological role, key enzyme in the regulation of glycerol uptake and metabolism. Catalyzes the phosphorylation of glycerol to yield sn-glycerol 3-phosphate. The chain is Glycerol kinase 2 from Clostridium tetani (strain Massachusetts / E88).